A 556-amino-acid chain; its full sequence is Polypeptide N-acetylgalactosaminyltransferase 13 (556 aa).

Topologically, residues 1-4 are cytoplasmic; the sequence is MRRL. Residues 5–27 form a helical; Signal-anchor for type II membrane protein membrane-spanning segment; sequence VYCKVVLATSLMWVLVDVFLLLY. Residues 28–556 are Lumenal-facing; sequence FSECNKCDDK…WLLRNMTLGT (529 aa). 2 N-linked (GlcNAc...) asparagine glycosylation sites follow: Asn94 and Asn116. 5 disulfides stabilise this stretch: Cys105-Cys338, Cys329-Cys407, Cys441-Cys458, Cys481-Cys496, and Cys522-Cys539. Positions 114–224 are catalytic subdomain A; that stretch reads LPNTSVVIVF…LGWLEPLLAR (111 aa). Asp155 and Arg185 together coordinate substrate. Residues Asp208 and His210 each coordinate Mn(2+). Residues 284–346 form a catalytic subdomain B region; sequence PVRTPTMAGG…TCSHVGHVFR (63 aa). Trp315 serves as a coordination point for substrate. His343 provides a ligand contact to Mn(2+). The substrate site is built by Arg346 and Tyr351. The 123-residue stretch at 428 to 550 folds into the Ricin B-type lectin domain; that stretch reads YSLGEIRNVE…GSRSQQWLLR (123 aa). Asn551 carries an N-linked (GlcNAc...) asparagine glycan.

This sequence belongs to the glycosyltransferase 2 family. GalNAc-T subfamily. Mn(2+) serves as cofactor.

The protein localises to the golgi apparatus membrane. The enzyme catalyses L-seryl-[protein] + UDP-N-acetyl-alpha-D-galactosamine = a 3-O-[N-acetyl-alpha-D-galactosaminyl]-L-seryl-[protein] + UDP + H(+). The catalysed reaction is L-threonyl-[protein] + UDP-N-acetyl-alpha-D-galactosamine = a 3-O-[N-acetyl-alpha-D-galactosaminyl]-L-threonyl-[protein] + UDP + H(+). It participates in protein modification; protein glycosylation. Functionally, catalyzes the initial reaction in O-linked oligosaccharide biosynthesis, the transfer of an N-acetyl-D-galactosamine (GalNAc) residue from UDP-GalNAc to a serine or threonine residue on the protein receptor. Generates GalNAc-O-Ser/Thr structure also known as Tn antigen, which itself is immunogenic but also serves as a precursor for the synthesis of different mucin-type O-glycan core structures. Contributes to the synthesis of O-linked glycans on mucins and proteoglycans of the central nervous system. Can glycosylate both unmodified peptides and glycopeptides that already contain an O-linked GalNAc sugar. Transfers GalNAc to Thr-/Ser-rich tandem repeats GTTPSPVPTTSTTSAP of MUC5AC. Transfers GalNAc to three consecutive serine/threonine residues on SDC3 forming a triplet-Tn epitope expressed in Purkinje cells of the developing brain. May promote neurogenesis through glycosylation and stabilization of PDPN. The polypeptide is Polypeptide N-acetylgalactosaminyltransferase 13 (Galnt13) (Rattus norvegicus (Rat)).